A 164-amino-acid chain; its full sequence is Serine/arginine-rich splicing factor 3 (164 aa).

N-acetylmethionine is present on methionine 1. The sufficient for interaction with NXF1 and SRSP stretch occupies residues 1 to 90 (MHRDSCPLDC…SNGEKRSRNR (90 aa)). Serine 5 bears the Phosphoserine mark. The region spanning 10–83 (CKVYVGNLGN…CRVRVELSNG (74 aa)) is the RRM domain. Lysine 23 carries the post-translational modification N6-acetyllysine. The disordered stretch occupies residues 81-164 (SNGEKRSRNR…RSRSRSNERK (84 aa)). Basic residues predominate over residues 107-128 (RSPPPRRRSPRRRSFSRSRSRS). One copy of the B-1 repeat lies at 119–133 (RSFSRSRSRSLSRDR). Positions 119–164 (RSFSRSRSRSLSRDRRRERSLSRERNHKPSRSFSRSRSRSRSNERK) are 2 X approximate repeats, basic. A compositionally biased stretch (basic and acidic residues) spans 129–142 (LSRDRRRERSLSRE). A compositionally biased stretch (basic residues) spans 143–158 (RNHKPSRSFSRSRSRS). A B-2 repeat occupies 149–164 (RSFSRSRSRSRSNERK).

Belongs to the splicing factor SR family. In terms of assembly, interacts with CPSF6. Interacts with RBMY1A1. Interacts with SREK1/SFRS12. Interacts with NXF1. Interacts with YTHDC1, leading to recruitment to RNA elements adjacent to m6A sites. Interacts with SRSP; increases SRSF3 binding to specific exons. In terms of processing, phosphorylated by CLK1, CLK2, CLK3 and CLK4. Extensively phosphorylated on serine residues in the RS domain.

Its subcellular location is the nucleus. The protein localises to the nucleus speckle. The protein resides in the cytoplasm. Functionally, splicing factor, which binds the consensus motif 5'-C[ACU][AU]C[ACU][AC]C-3' within pre-mRNA and promotes specific exons inclusion during alternative splicing. Interaction with YTHDC1, a RNA-binding protein that recognizes and binds N6-methyladenosine (m6A)-containing RNAs, promotes recruitment of SRSF3 to its mRNA-binding elements adjacent to m6A sites within exons. Also functions as an adapter involved in mRNA nuclear export. Binds mRNA which is thought to be transferred to the NXF1-NXT1 heterodimer for export (TAP/NXF1 pathway); enhances NXF1-NXT1 RNA-binding activity. Involved in nuclear export of m6A-containing mRNAs via interaction with YTHDC1: interaction with YTHDC1 facilitates m6A-containing mRNA-binding to both SRSF3 and NXF1, promoting mRNA nuclear export. The polypeptide is Serine/arginine-rich splicing factor 3 (SRSF3) (Bos taurus (Bovine)).